Reading from the N-terminus, the 99-residue chain is DASH complex subunit DAD1 (99 aa).

The segment at 69–99 (GMNHQTRENTRDENNKISSSDTEDENNNNKI) is disordered. Over residues 73–83 (QTRENTRDENN) the composition is skewed to basic and acidic residues. Residues 89–99 (DTEDENNNNKI) show a composition bias toward acidic residues.

Belongs to the DASH complex DAD1 family. As to quaternary structure, component of the DASH complex consisting of ASK1, DAD1, DAD2, DAD3, DAD4, DAM1, DUO1, HSK3, SPC19 and SPC34, with a stoichiometry of one copy of each subunit per complex. Multiple DASH complexes oligomerize to form a ring that encircles spindle microtubules and organizes the rod-like NDC80 complexes of the outer kinetochore. DASH complex oligomerization strengthens microtubule attachments. On cytoplasmic microtubules, DASH complexes appear to form patches instead of rings.

It localises to the chromosome. The protein localises to the centromere. The protein resides in the kinetochore. Its subcellular location is the cytoplasm. It is found in the cytoskeleton. It localises to the spindle. The protein localises to the nucleus. In terms of biological role, component of the DASH complex that connects microtubules with kinetochores and couples microtubule depolymerisation to chromosome movement; it is involved in retrieving kinetochores to the spindle poles before their re-orientation on the spindle in early mitosis and allows microtubule depolymerization to pull chromosomes apart and resist detachment during anaphase. Kinetochores, consisting of a centromere-associated inner segment and a microtubule-contacting outer segment, play a crucial role in chromosome segregation by mediating the physical connection between centromeric DNA and microtubules. Kinetochores also serve as an input point for the spindle assembly checkpoint, which delays anaphase until all chromosomes have bioriented on the mitotic spindle. This Candida albicans (strain SC5314 / ATCC MYA-2876) (Yeast) protein is DASH complex subunit DAD1.